Here is a 444-residue protein sequence, read N- to C-terminus: Tubulin beta 8B (444 aa).

The short motif at 1–4 (MREI) is the MREI motif element. Positions 11, 69, 138, 142, 143, and 144 each coordinate GTP. E69 is a Mg(2+) binding site. S172 carries the post-translational modification Phosphoserine; by CDK1. GTP is bound by residues N204 and N226. The disordered stretch occupies residues 421-444 (EYQQYQDATAEEEEDEEYAEEEVA). Positions 429–444 (TAEEEEDEEYAEEEVA) are enriched in acidic residues. At E436 the chain carries 5-glutamyl polyglutamate.

This sequence belongs to the tubulin family. In terms of assembly, dimer of alpha and beta chains. A typical microtubule is a hollow water-filled tube with an outer diameter of 25 nm and an inner diameter of 15 nM. Alpha-beta heterodimers associate head-to-tail to form protofilaments running lengthwise along the microtubule wall with the beta-tubulin subunit facing the microtubule plus end conferring a structural polarity. Microtubules usually have 13 protofilaments but different protofilament numbers can be found in some organisms and specialized cells. Requires Mg(2+) as cofactor. Post-translationally, some glutamate residues at the C-terminus are polyglutamylated, resulting in polyglutamate chains on the gamma-carboxyl group. Polyglutamylation plays a key role in microtubule severing by spastin (SPAST). SPAST preferentially recognizes and acts on microtubules decorated with short polyglutamate tails: severing activity by SPAST increases as the number of glutamates per tubulin rises from one to eight, but decreases beyond this glutamylation threshold. Glutamylation is also involved in cilia motility. Some glutamate residues at the C-terminus are monoglycylated but not polyglycylated due to the absence of functional TTLL10 in human. Monoglycylation is mainly limited to tubulin incorporated into cilia and flagella axonemes, which is required for their stability and maintenance. Flagella glycylation controls sperm motility. Both polyglutamylation and monoglycylation can coexist on the same protein on adjacent residues, and lowering glycylation levels increases polyglutamylation, and reciprocally. In terms of processing, phosphorylated on Ser-172 by CDK1 during the cell cycle, from metaphase to telophase, but not in interphase. This phosphorylation inhibits tubulin incorporation into microtubules.

It is found in the cytoplasm. Its subcellular location is the cytoskeleton. Its function is as follows. Tubulin is the major constituent of microtubules, a cylinder consisting of laterally associated linear protofilaments composed of alpha- and beta-tubulin heterodimers. Microtubules grow by the addition of GTP-tubulin dimers to the microtubule end, where a stabilizing cap forms. Below the cap, tubulin dimers are in GDP-bound state, owing to GTPase activity of alpha-tubulin. This Homo sapiens (Human) protein is Tubulin beta 8B.